A 595-amino-acid chain; its full sequence is Inactive serine/threonine-protein kinase PLK5 (595 aa).

Residues 27-279 (YRRGKLIGKG…LDHLLQDDFF (253 aa)) form the Protein kinase domain. ATP-binding positions include 33-41 (IGKGAFSRC) and lysine 56. The Proton acceptor role is filled by aspartate 150. A disordered region spans residues 326–350 (FTSKEASGPGEEGTEPDHMEAGNEE). The segment covering 340–350 (EPDHMEAGNEE) has biased composition (basic and acidic residues). 2 POLO box domains span residues 413-491 (WAPK…YMQR) and 509-595 (DISL…LQSV).

The protein belongs to the protein kinase superfamily. Ser/Thr protein kinase family. CDC5/Polo subfamily. As to expression, expressed in the cerebellum, eye and brain cortex (at protein level). Expressed in highly differentiated tissues, such as brain, eyes and ovary. Not detectable in proliferating tissues, such as the colon, spleen and placenta.

It is found in the nucleus. The protein resides in the nucleolus. The protein localises to the cytoplasm. Functionally, inactive serine/threonine-protein kinase that plays a role in cell cycle progression and neuronal differentiation. The sequence is that of Inactive serine/threonine-protein kinase PLK5 from Mus musculus (Mouse).